Reading from the N-terminus, the 223-residue chain is Peptidyl-prolyl cis-trans isomerase FKBP16-3, chloroplastic (223 aa).

The N-terminal 36 residues, 1-36 (MAASSPSLLLPLGSASRNGLTTKNPNSSRYIAARVI), are a transit peptide targeting the chloroplast. Residues 37–76 (ASETREQSCKISNLSSRREAMLLVLGVSGGLSMSSLAAYA) constitute a thylakoid transit peptide. Residues 124–216 (GFQVAANYVA…IFDVSLEFIP (93 aa)) form the PPIase FKBP-type domain.

It belongs to the FKBP-type PPIase family.

Its subcellular location is the plastid. The protein resides in the chloroplast thylakoid lumen. It carries out the reaction [protein]-peptidylproline (omega=180) = [protein]-peptidylproline (omega=0). Its function is as follows. PPIases accelerate the folding of proteins. It catalyzes the cis-trans isomerization of proline imidic peptide bonds in oligopeptides. This is Peptidyl-prolyl cis-trans isomerase FKBP16-3, chloroplastic (FKBP16-3) from Arabidopsis thaliana (Mouse-ear cress).